The following is a 128-amino-acid chain: Translation initiation factor 5A (128 aa).

Lysine 35 is subject to Hypusine.

The protein belongs to the eIF-5A family.

The protein resides in the cytoplasm. In terms of biological role, functions by promoting the formation of the first peptide bond. This Methanosarcina mazei (strain ATCC BAA-159 / DSM 3647 / Goe1 / Go1 / JCM 11833 / OCM 88) (Methanosarcina frisia) protein is Translation initiation factor 5A (eif5a).